The primary structure comprises 193 residues: MKITNVEMVISAVKQEQYPAGQLPEFALAGRSNVGKSSFINKMINRKNFARTSSKPGKTQTLNFYRINDAFYFVDVPGYGFAKVSKTEREAWGKMIETYFTTREQLKAALLIVDLRHPPTKDDVMMYEFLKHYNIPTLVIATKADKIPRGKWQQHAKVAKETLRLISDDELIIFSAETGQGKDEAWGALQKWM.

The EngB-type G domain maps to 22–193; the sequence is QLPEFALAGR…EAWGALQKWM (172 aa). Residues 30–37, 57–61, 75–78, 142–145, and 174–176 contribute to the GTP site; these read GRSNVGKS, GKTQT, DVPG, TKAD, and FSA. 2 residues coordinate Mg(2+): Ser-37 and Thr-59.

Belongs to the TRAFAC class TrmE-Era-EngA-EngB-Septin-like GTPase superfamily. EngB GTPase family. It depends on Mg(2+) as a cofactor.

In terms of biological role, necessary for normal cell division and for the maintenance of normal septation. This chain is Probable GTP-binding protein EngB, found in Anoxybacillus flavithermus (strain DSM 21510 / WK1).